The primary structure comprises 745 residues: MRFGKEFVSQMIPEWQEAYIDYAYLKTILQDIQASRNRSDSNNQSSTPSFARNLTRRYNRDALVSENHDIVVNTVTRLEEGLETAAYETTFLKAGEAGGDFEVTFFRTLDREFNKVNNFYRLKVETARTEALALNKQMDALIAFRHKVMDQNQKNPSVFDSVSEDINGSASEVGSSSKCTEHNVALADLMRNEDTSNESILERIRMNKTREITPLSAIKTILKVHKQDELKFTRDNLKEVEKRLQVAFIEFYQKLRHLKNYSFLNASAVSKIMKKYDKIAKRNAAKLYMEMVDKSFLSSSEEVHKLLLKVESIFIEHFSNSNRREGMSHLRPKINKERHLITFSTGFFFGCGISLIVALGLIIHARNIMGTPGQRTYMETMFPLYRFFGFVVLHMDVYAANIYFWRRYRVNYSFIFGFKQGTELGYRHVLLLSFGLGTLSLCAVLLNLDMEMDAQTKDYRLVTELIPLFLLVLVIIIVLCPFNILYRSSRFFFLSVLFRCIAAPFYAVHLPDFFLGDQLTSQVQALRSLEFYICYYGFGDFRYRRRNTCTSNIGFRTFYFIVAVIPYWLRFLQCIRRMVEDRDLSHGYNGIKYLLTIVAASLRTAYTLNRGSNWNITAWVFSGVATFYGTYWDIVLDWGLLQRGCKNSFLRDKLLVPHKTVYYAAMVLNVLLRLVWLQTVLDLKFSFLHRETMVALMACLEIIRRGIWNFFRLENEHLNNVGRYRAFKTVPLPFNYEEDGDHHNN.

Residues Met1–Glu290 enclose the SPX domain. Topologically, residues Met1–Thr342 are cytoplasmic. A helical membrane pass occupies residues Phe343–Ile363. At His364–Pro383 the chain is on the extracellular side. Residues Leu384 to Phe404 form a helical membrane-spanning segment. Residues Trp405–Arg427 are Cytoplasmic-facing. The chain crosses the membrane as a helical span at residues His428 to Leu448. Topologically, residues Asp449–Glu464 are extracellular. A helical membrane pass occupies residues Leu465–Leu485. Residues Tyr486–Asn615 are Cytoplasmic-facing. Positions Thr550 to Asn744 constitute an EXS domain. The chain crosses the membrane as a helical span at residues Ile616–Leu636. The Extracellular portion of the chain corresponds to Asp637–Thr660. A helical membrane pass occupies residues Val661–Leu681. Residues Asp682 to Asn745 lie on the Cytoplasmic side of the membrane.

This sequence belongs to the SYG1 (TC 2.A.94) family. Expressed in root epidermis and cortex, leaf hydathodes, pollen grains and stigma apex.

It is found in the cell membrane. Its function is as follows. May transport inorganic phosphate (Pi). The polypeptide is Phosphate transporter PHO1 homolog 4 (PHO1-H4) (Arabidopsis thaliana (Mouse-ear cress)).